Here is a 180-residue protein sequence, read N- to C-terminus: Signal peptidase complex subunit 2 (180 aa).

At 1-45 (MTDEPVKVVNKWDGPTVKNALDEVVKKILNDKVGWTESHNLMNLR) the chain is on the cytoplasmic side. A helical membrane pass occupies residues 46–66 (LLISFIGVAFSAFACGYDYYE). At 67–72 (PFPKSK) the chain is on the lumenal side. The chain crosses the membrane as a helical span at residues 73 to 93 (IVLAVCSVSYFICMGILQMYQ). Residues 94-180 (WYVEKDCIYE…LYNRLIRSEQ (87 aa)) lie on the Cytoplasmic side of the membrane.

It belongs to the SPCS2 family. Component of the signal peptidase complex (SPC) composed of a catalytic subunit sec-11 and three accessory subunits spcs-1, spcs-2 and spcs-3. The complex induces a local thinning of the ER membrane which is used to measure the length of the signal peptide (SP) h-region of protein substrates. This ensures the selectivity of the complex towards h-regions shorter than 18-20 amino acids.

The protein resides in the endoplasmic reticulum membrane. Its function is as follows. Component of the signal peptidase complex (SPC) which catalyzes the cleavage of N-terminal signal sequences from nascent proteins as they are translocated into the lumen of the endoplasmic reticulum. Enhances the enzymatic activity of SPC and facilitates the interactions between different components of the translocation site. This is Signal peptidase complex subunit 2 from Caenorhabditis elegans.